Here is a 167-residue protein sequence, read N- to C-terminus: MKMMVVFLFSILLVFGFVAFASKPSPVYGGLSLVVSGGLGCAIVVSLEDVFLGLIVFLIYLGGMLVVFGYTAAMATEEYPESWVGNTVALSMLLFTVIVESAWYLMSGEVKVSMDIELFDIIGGYCVGQDYSGVSLLYGCGGWALVLLGWILFITIYVVLEVVRGCN.

5 helical membrane passes run 1-21 (MKMMVVFLFSILLVFGFVAFA), 27-47 (VYGGLSLVVSGGLGCAIVVSL), 50-70 (VFLGLIVFLIYLGGMLVVFGY), 88-108 (VALSMLLFTVIVESAWYLMSG), and 143-163 (WALVLLGWILFITIYVVLEVV).

The protein belongs to the complex I subunit 6 family. In terms of assembly, core subunit of respiratory chain NADH dehydrogenase (Complex I) which is composed of 45 different subunits.

Its subcellular location is the mitochondrion inner membrane. It catalyses the reaction a ubiquinone + NADH + 5 H(+)(in) = a ubiquinol + NAD(+) + 4 H(+)(out). In terms of biological role, core subunit of the mitochondrial membrane respiratory chain NADH dehydrogenase (Complex I) which catalyzes electron transfer from NADH through the respiratory chain, using ubiquinone as an electron acceptor. Essential for the catalytic activity and assembly of complex I. This Osphranter robustus (Wallaroo) protein is NADH-ubiquinone oxidoreductase chain 6 (MT-ND6).